Here is a 645-residue protein sequence, read N- to C-terminus: 1-deoxy-D-xylulose-5-phosphate synthase (645 aa).

Residues His79 and 120–122 (AHS) contribute to the thiamine diphosphate site. Asp155 serves as a coordination point for Mg(2+). Residues 156–157 (GA), Asn184, Tyr293, and Glu375 contribute to the thiamine diphosphate site. Mg(2+) is bound at residue Asn184.

The protein belongs to the transketolase family. DXPS subfamily. In terms of assembly, homodimer. It depends on Mg(2+) as a cofactor. Thiamine diphosphate serves as cofactor.

The catalysed reaction is D-glyceraldehyde 3-phosphate + pyruvate + H(+) = 1-deoxy-D-xylulose 5-phosphate + CO2. The protein operates within metabolic intermediate biosynthesis; 1-deoxy-D-xylulose 5-phosphate biosynthesis; 1-deoxy-D-xylulose 5-phosphate from D-glyceraldehyde 3-phosphate and pyruvate: step 1/1. Functionally, catalyzes the acyloin condensation reaction between C atoms 2 and 3 of pyruvate and glyceraldehyde 3-phosphate to yield 1-deoxy-D-xylulose-5-phosphate (DXP). The polypeptide is 1-deoxy-D-xylulose-5-phosphate synthase (Ruegeria sp. (strain TM1040) (Silicibacter sp.)).